We begin with the raw amino-acid sequence, 405 residues long: L-rhamnonate dehydratase (405 aa).

Substrate is bound by residues His33 and Arg59. Mg(2+) contacts are provided by Asp226, Glu252, and Glu280. The Proton acceptor role is filled by His329. Glu349 contributes to the substrate binding site.

It belongs to the mandelate racemase/muconate lactonizing enzyme family. RhamD subfamily. In terms of assembly, homooctamer; tetramer of dimers. Requires Mg(2+) as cofactor.

The enzyme catalyses L-rhamnonate = 2-dehydro-3-deoxy-L-rhamnonate + H2O. Its function is as follows. Catalyzes the dehydration of L-rhamnonate to 2-keto-3-deoxy-L-rhamnonate (KDR). The protein is L-rhamnonate dehydratase of Salmonella paratyphi C (strain RKS4594).